We begin with the raw amino-acid sequence, 168 residues long: Crossover junction endodeoxyribonuclease RuvC (168 aa).

Residues D7, E67, and H139 contribute to the active site. Mg(2+)-binding residues include D7, E67, and H139.

Belongs to the RuvC family. In terms of assembly, homodimer which binds Holliday junction (HJ) DNA. The HJ becomes 2-fold symmetrical on binding to RuvC with unstacked arms; it has a different conformation from HJ DNA in complex with RuvA. In the full resolvosome a probable DNA-RuvA(4)-RuvB(12)-RuvC(2) complex forms which resolves the HJ. Mg(2+) is required as a cofactor.

The protein resides in the cytoplasm. The enzyme catalyses Endonucleolytic cleavage at a junction such as a reciprocal single-stranded crossover between two homologous DNA duplexes (Holliday junction).. Functionally, the RuvA-RuvB-RuvC complex processes Holliday junction (HJ) DNA during genetic recombination and DNA repair. Endonuclease that resolves HJ intermediates. Cleaves cruciform DNA by making single-stranded nicks across the HJ at symmetrical positions within the homologous arms, yielding a 5'-phosphate and a 3'-hydroxyl group; requires a central core of homology in the junction. The consensus cleavage sequence is 5'-(A/T)TT(C/G)-3'. Cleavage occurs on the 3'-side of the TT dinucleotide at the point of strand exchange. HJ branch migration catalyzed by RuvA-RuvB allows RuvC to scan DNA until it finds its consensus sequence, where it cleaves and resolves the cruciform DNA. The protein is Crossover junction endodeoxyribonuclease RuvC of Deinococcus geothermalis (strain DSM 11300 / CIP 105573 / AG-3a).